Reading from the N-terminus, the 153-residue chain is UPF0251 protein CT0950 (153 aa).

It belongs to the UPF0251 family.

The polypeptide is UPF0251 protein CT0950 (Chlorobaculum tepidum (strain ATCC 49652 / DSM 12025 / NBRC 103806 / TLS) (Chlorobium tepidum)).